We begin with the raw amino-acid sequence, 199 residues long: MARCKS-related protein (199 aa).

A disordered region spans residues M1 to E199. The N-myristoyl glycine moiety is linked to residue G2. T14 is modified (phosphothreonine). The span at E16–A26 shows a compositional bias: low complexity. A phosphoserine mark is found at S22, S36, and S48. Residues G53 to A64 are compositionally biased toward low complexity. S71 carries the post-translational modification Phosphoserine. Residues A74–T85 show a composition bias toward basic and acidic residues. T85 carries the post-translational modification Phosphothreonine. The span at P86–F98 shows a compositional bias: basic residues. The segment at K87 to K110 is effector domain involved in lipid-binding and calmodulin-binding. A phosphoserine; by PKC mark is found at S93, S101, and S104. S119 is subject to Phosphoserine. S120 carries the phosphoserine; by MAPK8 modification. 2 positions are modified to phosphoserine: S132 and S135. T148 carries the phosphothreonine; by MAPK8 modification. 3 positions are modified to phosphoserine: S151, S162, and S165. The segment covering G175 to E199 has biased composition (low complexity). At T183 the chain carries Phosphothreonine; by MAPK8.

It belongs to the MARCKS family. Binds to filamentous actin (F-actin), but not to monomeric G-actin, independently of its phosphorylation status. Interacts with calmodulin. Post-translationally, phosphorylated. Phosphorylation at Ser-120 and Thr-183 is non-redundantly catalyzed by MAPK8 in vivo. Phosphorylation at Thr-148 is preferentially catalyzed by MAPK8 in vivo, but this modification can also be catalyzed by other kinases in the absence of MAPK8. May be phosphorylated by protein kinase C, which disrupts the interaction with calmodulin.

It is found in the cytoplasm. It localises to the cytoskeleton. Its subcellular location is the cell membrane. In terms of biological role, controls cell movement by regulating actin cytoskeleton homeostasis and filopodium and lamellipodium formation. When unphosphorylated, induces cell migration. When phosphorylated by MAPK8, induces actin bundles formation and stabilization, thereby reducing actin plasticity, hence restricting cell movement, including neuronal migration. May be involved in coupling the protein kinase C and calmodulin signal transduction systems. This is MARCKS-related protein (Marcksl1) from Rattus norvegicus (Rat).